Here is a 129-residue protein sequence, read N- to C-terminus: Large-conductance mechanosensitive channel (129 aa).

3 helical membrane-spanning segments follow: residues 14–34 (IIDL…VTSL), 38–58 (IIMP…SFVY), and 67–87 (LGVF…IFMA).

It belongs to the MscL family. In terms of assembly, homopentamer.

The protein localises to the cell membrane. Its function is as follows. Channel that opens in response to stretch forces in the membrane lipid bilayer. May participate in the regulation of osmotic pressure changes within the cell. This Lysinibacillus sphaericus (strain C3-41) protein is Large-conductance mechanosensitive channel.